The chain runs to 830 residues: Phenylalanine--tRNA ligase beta subunit (830 aa).

Residues 39 to 158 (GQSLDGVVVG…DDTPVGTPFP (120 aa)) enclose the tRNA-binding domain. A B5 domain is found at 417–492 (PAEKTIALRP…RLHGYDQIPE (76 aa)). Residues Asp470, Asp476, Glu479, and Glu480 each coordinate Mg(2+). The interval 490–510 (IPEPERVPVPSRTPEQPPEET) is disordered. The FDX-ACB domain maps to 736–828 (SRFPVVDRDL…LAENHGARLR (93 aa)).

Belongs to the phenylalanyl-tRNA synthetase beta subunit family. Type 1 subfamily. Tetramer of two alpha and two beta subunits. Requires Mg(2+) as cofactor.

It localises to the cytoplasm. It carries out the reaction tRNA(Phe) + L-phenylalanine + ATP = L-phenylalanyl-tRNA(Phe) + AMP + diphosphate + H(+). The sequence is that of Phenylalanine--tRNA ligase beta subunit from Salinibacter ruber (strain DSM 13855 / M31).